We begin with the raw amino-acid sequence, 104 residues long: Large ribosomal subunit protein bL21 (104 aa).

Residues 81–90 (QGYRRHHGHR) are compositionally biased toward basic residues. Residues 81-104 (QGYRRHHGHRQPYTQVKITGISAG) are disordered.

Belongs to the bacterial ribosomal protein bL21 family. Part of the 50S ribosomal subunit. Contacts protein L20.

This protein binds to 23S rRNA in the presence of protein L20. The sequence is that of Large ribosomal subunit protein bL21 from Halorhodospira halophila (strain DSM 244 / SL1) (Ectothiorhodospira halophila (strain DSM 244 / SL1)).